Here is a 159-residue protein sequence, read N- to C-terminus: ATP synthase subunit b 2 (159 aa).

The helical transmembrane segment at Met1–Met21 threads the bilayer.

This sequence belongs to the ATPase B chain family. As to quaternary structure, F-type ATPases have 2 components, F(1) - the catalytic core - and F(0) - the membrane proton channel. F(1) has five subunits: alpha(3), beta(3), gamma(1), delta(1), epsilon(1). F(0) has three main subunits: a(1), b(2) and c(10-14). The alpha and beta chains form an alternating ring which encloses part of the gamma chain. F(1) is attached to F(0) by a central stalk formed by the gamma and epsilon chains, while a peripheral stalk is formed by the delta and b chains.

It is found in the cell inner membrane. In terms of biological role, f(1)F(0) ATP synthase produces ATP from ADP in the presence of a proton or sodium gradient. F-type ATPases consist of two structural domains, F(1) containing the extramembraneous catalytic core and F(0) containing the membrane proton channel, linked together by a central stalk and a peripheral stalk. During catalysis, ATP synthesis in the catalytic domain of F(1) is coupled via a rotary mechanism of the central stalk subunits to proton translocation. Functionally, component of the F(0) channel, it forms part of the peripheral stalk, linking F(1) to F(0). The protein is ATP synthase subunit b 2 of Brucella ovis (strain ATCC 25840 / 63/290 / NCTC 10512).